Consider the following 642-residue polypeptide: MSKNQNHEEYQDDARPLTIEEQRARLRQLIIMGKERGYITYSEINDALPDDMSDADQIDNIVSMISGLGIQVTEHAPDAEDILLSDNAAVTDDDAVEEAEAALSSADSEFGRTTDPVRMYMREMGQVDLLTREDEIIIAKKIENALKNMVQAISACPGSIAEILELIEKICKDEIRVDEVVEAIIDPNEVLRNELGLGHLETTAPEKPSNDNSDENEDDEESEEDADEISAANLAELKQKVIGHFAQIEKDYKKMIGCLEKHHSRHKDYLAYRDAIANKLLEVRFATRQIDSLSSSLRGKVENIRKLEREIRDICLDRVHMERDYFIQNFLPEITNLQWIEEEIAKGRVWSNALDRFRHAILEKQTELADMEKETRISIEELKEINKNMVSSEKVSAAAKQEMIQANLRLVISIAKKYTNRGLQFLDLIQEGNIGLMKAVDKFEYRRGYKFSTYATWWIRQAITRSIADQARTIRIPVHMIETINKMNRISRQHLQETGEEPDSAKLAELMQMPEDKIRKIMKIAKEPISMETPIGDDDDSHLGDFIEDANNVAPADAAMYTSLHEVTKEILESLTPREAKVLRMRFGIDMNTDHTLEEVGRQFDVTRERIRQIEAKALRKLRHPTRSDRLRSFLDSEDSKL.

The segment at 199–228 (HLETTAPEKPSNDNSDENEDDEESEEDADE) is disordered. Residues 212 to 228 (NSDENEDDEESEEDADE) show a composition bias toward acidic residues. Positions 403–473 (MIQANLRLVI…TRSIADQART (71 aa)) are sigma-70 factor domain-2. The short motif at 427–430 (DLIQ) is the Interaction with polymerase core subunit RpoC element. The segment at 482–558 (ETINKMNRIS…DANNVAPADA (77 aa)) is sigma-70 factor domain-3. Residues 571–624 (ILESLTPREAKVLRMRFGIDMNTDHTLEEVGRQFDVTRERIRQIEAKALRKLRH) are sigma-70 factor domain-4. Residues 597-616 (LEEVGRQFDVTRERIRQIEA) constitute a DNA-binding region (H-T-H motif).

It belongs to the sigma-70 factor family. RpoD/SigA subfamily. As to quaternary structure, interacts transiently with the RNA polymerase catalytic core.

The protein resides in the cytoplasm. In terms of biological role, sigma factors are initiation factors that promote the attachment of RNA polymerase to specific initiation sites and are then released. This sigma factor is the primary sigma factor during exponential growth. The chain is RNA polymerase sigma factor RpoD from Neisseria gonorrhoeae.